The chain runs to 361 residues: Phosphoserine aminotransferase (361 aa).

Residue Arg-42 participates in L-glutamate binding. Pyridoxal 5'-phosphate is bound by residues 76 to 77 (AS), Trp-102, Thr-152, Asp-172, and Gln-195. At Lys-196 the chain carries N6-(pyridoxal phosphate)lysine. 237–238 (NT) provides a ligand contact to pyridoxal 5'-phosphate.

It belongs to the class-V pyridoxal-phosphate-dependent aminotransferase family. SerC subfamily. In terms of assembly, homodimer. Requires pyridoxal 5'-phosphate as cofactor.

The protein resides in the cytoplasm. It carries out the reaction O-phospho-L-serine + 2-oxoglutarate = 3-phosphooxypyruvate + L-glutamate. The enzyme catalyses 4-(phosphooxy)-L-threonine + 2-oxoglutarate = (R)-3-hydroxy-2-oxo-4-phosphooxybutanoate + L-glutamate. The protein operates within amino-acid biosynthesis; L-serine biosynthesis; L-serine from 3-phospho-D-glycerate: step 2/3. Catalyzes the reversible conversion of 3-phosphohydroxypyruvate to phosphoserine and of 3-hydroxy-2-oxo-4-phosphonooxybutanoate to phosphohydroxythreonine. The polypeptide is Phosphoserine aminotransferase (Halalkalibacterium halodurans (strain ATCC BAA-125 / DSM 18197 / FERM 7344 / JCM 9153 / C-125) (Bacillus halodurans)).